The sequence spans 348 residues: Ninja-family protein AFP2 (348 aa).

Positions 186-272 are disordered; sequence DSDGGGATGG…VDRKGKGMAT (87 aa). The segment covering 187–197 has biased composition (gly residues); that stretch reads SDGGGATGGGS. Polar residues-rich tracts occupy residues 207–216 and 228–244; these read KNQQGSSNSC and CSSN…SVTR. Basic and acidic residues predominate over residues 247–267; the sequence is KVNENENEKRVRSEDSVDRKG.

Belongs to the Ninja family. Forms a homodimer and heterodimer with AFP1 and AFP3. Interacts with ABI5/DPBF1, DPBF2, AREB3/DPBF3, EEL/DPBF4, ABF1, ABF3/DPBF5 and ABF4/AREB2.

The protein localises to the nucleus. Acts as a negative regulator of abscisic acid (ABA) response during germination through the ubiquitin-mediated proteolysis of ABI5/DPBF1. The sequence is that of Ninja-family protein AFP2 (AFP2) from Arabidopsis thaliana (Mouse-ear cress).